We begin with the raw amino-acid sequence, 1648 residues long: MVVEAMSSCQFWYFDDITKYGRIEVLNNYVPTTLVTISILILLHNFFIRFYKYDIKKETPTPSLSLKLSSLNLSESDEEMPLTMHAQHNYGSHPSPSELNTDSSALYDRHFSINNIDSGEVNDPTKYHLIKRNMFEKFRVVIEFVIVAFQLLLHCYLSIEKSNLNGDLQKFHFKPHVLLWTILFTLATLRVLNLNQNNKFVNKYSGNIWLVSFANYTVIFLAHILPFRSALIGHVNDYGSSQYYKSQFWLNLVLMALLLTSPIGNNLPVLYQPQQDRAPSPEPYVSLLTFFSFHWVQPFINKAYKNNSLSHSDLWSLKLEDYSINVMKSFLEFRNRPSMRSSRFGISLLRYFLNLFMFQWCFTTISAFSIFVPTILLKKLLDFIEHKDKGSMNLAWFYVFGMFISRFIVAICDHCNLFLGRRVCVRMKSIIISEIYSKALKRKITKQSKPADENNENDMIKHDEVSPQEVNDTTHVNADEESYSSNLGSIINLMSVDAFKISELCAYLHYFLETAIMLTVSLILLYKVIGTAAFVGILITIIIIPINSKLYAVVGTLQAGNLACTDKRVEKLNESFQAIRIIKYFSWEDKFKEGIMLVREKELALLLKRCMVWCVLAFSWFITPTLITGCTFAYSILIEKKQLTTPVAFTALSLFTLLRDPLDRISDMLSYLIQSKISLDRVQRFLETEETDKYDQLTVDKNGKRLAFENVTLRWDSDKDSFVLRNLDIEFMTGKLNVIVGATGSGKTSILMGLLGEMQLSEGKIIVPSLSPRHEYQSQAGVINDSIAYCSQAAWLLNDTVRNNILFNAPFDQARYDAVVEACSLKRDFQILKAGDSTEIGEKGITLSGGQKQRVSLARALYSSAGHLLLDDCLSAVDSHTALWIYDKCISGPLMEGRTCILVTHNIALTMKNADFVVMIEDGKVKEKGTPIELLAKGLLGEDENMKKSIISRSASSASLKGKSERSLGTTPAPVEIVQDSTPVNDDGKLIEEEGKAMGFVGKEIYKWYIKMYGGWYTIVALASVFTAILCLQITQAWWIRNWTVKRFSDVDESNYNLPASTFIVESRNRVLLTNEAGKKESENQNAGIAKFLVVYCLIGVMSSIIGSIKTFVNSLFGIRASKLIFDSLLDRVLHARVRFFDSTPIGRIMNRFSKDIESIDQEIPPNIQSVFYSAIEVFATLLLISYITPAFFPVAIIIVLGYSIVGFFYLTTSRELKRLDSISKSPIFQHFSETLVGVTTIRAFGDEQRFIKENLSMIDQNSMPFFYLWVVNRWLSFRIDLIGALVIFSSGVFILLNINNIDAGLAGISLTYAISFTEAALWLVRQYSELEMNMNSVERVLEYMNIEQEPLIADPANAVTPPPQWPDSGKVEVNNLSLKYAPHLPYVIKDVTFTIEPLEKVGIVGRTGAGKSTIITALFRFLEADTGSIKLDGVNIANIDLKRLRRSITIIPQDPTLFAGSIRSNLDPYDEYSDEEIFTALKRVNLVSTEEMEASTSEIQSNSSKNVNKFLNLESEIAEGGSNFSQGQRQLMCLARSLLRMPKVILLDEATASIDYNSDAKIQETIRQEFNNSTVLTIAHRLRSIVDYDKILVMDAGEVKEFDHPYSLLLEKKSIFYNMCEDSGELDVLIDLAKKSFISRLNSDSKK.

The helical transmembrane segment at 28 to 48 (NYVPTTLVTISILILLHNFFI) threads the bilayer. A glycan (N-linked (GlcNAc...) asparagine) is linked at Asn72. 4 consecutive transmembrane segments (helical) span residues 140–160 (VVIEFVIVAFQLLLHCYLSIE), 175–195 (PHVLLWTILFTLATLRVLNLN), 207–227 (NIWLVSFANYTVIFLAHILPF), and 250–270 (LNLVLMALLLTSPIGNNLPVL). The N-linked (GlcNAc...) asparagine glycan is linked to Asn306. 2 helical membrane passes run 352 to 372 (FLNLFMFQWCFTTISAFSIFV) and 392 to 412 (MNLAWFYVFGMFISRFIVAIC). The ABC transmembrane type-1 1 domain occupies 361–674 (CFTTISAFSI…ISDMLSYLIQ (314 aa)). N-linked (GlcNAc...) asparagine glycosylation occurs at Asn471. Helical transmembrane passes span 501 to 521 (ISELCAYLHYFLETAIMLTVS) and 523 to 543 (ILLYKVIGTAAFVGILITIII). N-linked (GlcNAc...) asparagine glycosylation is present at Asn573. Transmembrane regions (helical) follow at residues 612–632 (VWCVLAFSWFITPTLITGCTF) and 643–662 (LTTPVAFTALSLFTLLRDPL). The 242-residue stretch at 706–947 (LAFENVTLRW…GLLGEDENMK (242 aa)) folds into the ABC transporter 1 domain. Asn710 is a glycosylation site (N-linked (GlcNAc...) asparagine). 741–748 (GATGSGKT) provides a ligand contact to ATP. Residues Asn784 and Asn798 are each glycosylated (N-linked (GlcNAc...) asparagine). A helical membrane pass occupies residues 1012 to 1032 (MYGGWYTIVALASVFTAILCL). One can recognise an ABC transmembrane type-1 2 domain in the interval 1032–1333 (LQITQAWWIR…LVRQYSELEM (302 aa)). N-linked (GlcNAc...) asparagine glycosylation occurs at Asn1042. 3 helical membrane-spanning segments follow: residues 1089 to 1109 (IAKFLVVYCLIGVMSSIIGSI), 1168 to 1188 (IQSVFYSAIEVFATLLLISYI), and 1191 to 1211 (AFFPVAIIIVLGYSIVGFFYL). N-linked (GlcNAc...) asparagine glycosylation occurs at Asn1255. A run of 2 helical transmembrane segments spans residues 1282–1302 (LIGALVIFSSGVFILLNINNI) and 1305–1325 (GLAGISLTYAISFTEAALWLV). The ABC transporter 2 domain maps to 1372 to 1622 (VEVNNLSLKY…KKSIFYNMCE (251 aa)). Asn1376 carries an N-linked (GlcNAc...) asparagine glycan. Position 1406–1413 (1406–1413 (GRTGAGKS)) interacts with ATP. Residues Asn1503, Asn1524, and Asn1573 are each glycosylated (N-linked (GlcNAc...) asparagine).

The protein belongs to the ABC transporter superfamily. ABCC family. Conjugate transporter (TC 3.A.1.208) subfamily.

The protein localises to the membrane. Pleiotropic ABC efflux transporter that might be involved in the resistance to azoles such as fluconazole. In Candida glabrata (strain ATCC 2001 / BCRC 20586 / JCM 3761 / NBRC 0622 / NRRL Y-65 / CBS 138) (Yeast), this protein is Pleiotropic ABC efflux transporter of multiple drugs YBT1.